The following is a 388-amino-acid chain: Chalcone synthase DIV (388 aa).

The active site involves Cys-164.

The protein belongs to the thiolase-like superfamily. Chalcone/stilbene synthases family.

The enzyme catalyses (E)-4-coumaroyl-CoA + 3 malonyl-CoA + 3 H(+) = 2',4,4',6'-tetrahydroxychalcone + 3 CO2 + 4 CoA. It functions in the pathway secondary metabolite biosynthesis; flavonoid biosynthesis. In terms of biological role, the primary product of this enzyme is 4,2',4',6'-tetrahydroxychalcone (also termed naringenin-chalcone or chalcone) which can under specific conditions spontaneously isomerize into naringenin. The chain is Chalcone synthase DIV (CHS-DIV) from Ipomoea batatas (Sweet potato).